A 238-amino-acid chain; its full sequence is Probable transcriptional regulatory protein llmg_0242 (238 aa).

This sequence belongs to the TACO1 family. YeeN subfamily.

The protein resides in the cytoplasm. The protein is Probable transcriptional regulatory protein llmg_0242 of Lactococcus lactis subsp. cremoris (strain MG1363).